We begin with the raw amino-acid sequence, 456 residues long: Exodeoxyribonuclease 7 large subunit (456 aa).

This sequence belongs to the XseA family. Heterooligomer composed of large and small subunits.

The protein resides in the cytoplasm. It catalyses the reaction Exonucleolytic cleavage in either 5'- to 3'- or 3'- to 5'-direction to yield nucleoside 5'-phosphates.. In terms of biological role, bidirectionally degrades single-stranded DNA into large acid-insoluble oligonucleotides, which are then degraded further into small acid-soluble oligonucleotides. This Lactobacillus delbrueckii subsp. bulgaricus (strain ATCC 11842 / DSM 20081 / BCRC 10696 / JCM 1002 / NBRC 13953 / NCIMB 11778 / NCTC 12712 / WDCM 00102 / Lb 14) protein is Exodeoxyribonuclease 7 large subunit.